Reading from the N-terminus, the 365-residue chain is Cyclin-D5-2 (365 aa).

The protein belongs to the cyclin family. Cyclin D subfamily.

This is Cyclin-D5-2 (CYCD5-2) from Oryza sativa subsp. japonica (Rice).